We begin with the raw amino-acid sequence, 353 residues long: THUMP domain-containing protein 1 (353 aa).

Residues 1 to 10 (MAAPAQQTTQ) show a composition bias toward polar residues. Disordered regions lie at residues 1–20 (MAAP…KGKA) and 73–96 (YGPE…DDAE). Ala-2 bears the N-acetylalanine mark. Phosphothreonine is present on Thr-79. 3 positions are modified to phosphoserine: Ser-86, Ser-88, and Ser-119. Residues 147 to 254 (DMYKTKKKKT…KAVCCLSVVK (108 aa)) enclose the THUMP domain. Ser-270 is modified (phosphoserine). The tract at residues 270–353 (SPKDPSQLNS…GSKSNENDFS (84 aa)) is disordered. Residues 273–282 (DPSQLNSKQG) are compositionally biased toward polar residues. Over residues 283–296 (NGKEAKLESADKSD) the composition is skewed to basic and acidic residues. Positions 297-327 (QNNTAEGKNNQQVPENTEELGQTKPTSNPQV) are enriched in polar residues.

Belongs to the THUMPD1 family. In terms of assembly, interacts with NAT10. Binds tRNA.

Functionally, functions as a tRNA-binding adapter to mediate NAT10-dependent tRNA acetylation modifying cytidine to N4-acetylcytidine (ac4C). The polypeptide is THUMP domain-containing protein 1 (THUMPD1) (Homo sapiens (Human)).